The chain runs to 392 residues: GTPase Obg (392 aa).

Positions 1–159 constitute an Obg domain; sequence MKFVDEATIL…RDLQLELMLL (159 aa). Positions 127-146 are disordered; that stretch reads NTRFKSSVNRTPRQKTMGTP. Residues 129–143 show a composition bias toward polar residues; sequence RFKSSVNRTPRQKTM. The OBG-type G domain occupies 160–333; the sequence is ADVGMLGLPN…LCWDVMAFIK (174 aa). GTP contacts are provided by residues 166-173, 191-195, 213-216, 283-286, and 314-316; these read GLPNAGKS, FTTLV, DIPG, NKVD, and SAA. Positions 173 and 193 each coordinate Mg(2+). The disordered stretch occupies residues 360–392; it reads QLEEAQPEVEEDDDWDDDWDEDDEEGVETIYQR. Residues 364–386 show a composition bias toward acidic residues; that stretch reads AQPEVEEDDDWDDDWDEDDEEGV.

The protein belongs to the TRAFAC class OBG-HflX-like GTPase superfamily. OBG GTPase family. In terms of assembly, monomer. Requires Mg(2+) as cofactor.

Its subcellular location is the cytoplasm. Its function is as follows. An essential GTPase which binds GTP, GDP and possibly (p)ppGpp with moderate affinity, with high nucleotide exchange rates and a fairly low GTP hydrolysis rate. Plays a role in control of the cell cycle, stress response, ribosome biogenesis and in those bacteria that undergo differentiation, in morphogenesis control. This is GTPase Obg from Erwinia tasmaniensis (strain DSM 17950 / CFBP 7177 / CIP 109463 / NCPPB 4357 / Et1/99).